Reading from the N-terminus, the 466-residue chain is Light-independent protochlorophyllide reductase subunit N (466 aa).

[4Fe-4S] cluster-binding residues include Cys24, Cys49, and Cys109.

This sequence belongs to the BchN/ChlN family. As to quaternary structure, protochlorophyllide reductase is composed of three subunits; ChlL, ChlN and ChlB. Forms a heterotetramer of two ChlB and two ChlN subunits. It depends on [4Fe-4S] cluster as a cofactor.

The catalysed reaction is chlorophyllide a + oxidized 2[4Fe-4S]-[ferredoxin] + 2 ADP + 2 phosphate = protochlorophyllide a + reduced 2[4Fe-4S]-[ferredoxin] + 2 ATP + 2 H2O. Its pathway is porphyrin-containing compound metabolism; chlorophyll biosynthesis (light-independent). Functionally, component of the dark-operative protochlorophyllide reductase (DPOR) that uses Mg-ATP and reduced ferredoxin to reduce ring D of protochlorophyllide (Pchlide) to form chlorophyllide a (Chlide). This reaction is light-independent. The NB-protein (ChlN-ChlB) is the catalytic component of the complex. In Synechococcus sp. (strain JA-3-3Ab) (Cyanobacteria bacterium Yellowstone A-Prime), this protein is Light-independent protochlorophyllide reductase subunit N.